Here is a 153-residue protein sequence, read N- to C-terminus: Aspartate carbamoyltransferase regulatory chain (153 aa).

Zn(2+) contacts are provided by C109, C114, C138, and C141.

It belongs to the PyrI family. As to quaternary structure, contains catalytic and regulatory chains. Requires Zn(2+) as cofactor.

Its function is as follows. Involved in allosteric regulation of aspartate carbamoyltransferase. The polypeptide is Aspartate carbamoyltransferase regulatory chain (Salmonella schwarzengrund (strain CVM19633)).